The sequence spans 205 residues: GTP cyclohydrolase-2 (205 aa).

49 to 53 provides a ligand contact to GTP; that stretch reads RLHSE. Zn(2+) contacts are provided by C54, C65, and C67. Residues Q70, 92–94, and T114 contribute to the GTP site; that span reads EGR. D126 functions as the Proton acceptor in the catalytic mechanism. The active-site Nucleophile is R128. 2 residues coordinate GTP: T149 and K154.

It belongs to the GTP cyclohydrolase II family. The cofactor is Zn(2+).

It carries out the reaction GTP + 4 H2O = 2,5-diamino-6-hydroxy-4-(5-phosphoribosylamino)-pyrimidine + formate + 2 phosphate + 3 H(+). It functions in the pathway cofactor biosynthesis; riboflavin biosynthesis; 5-amino-6-(D-ribitylamino)uracil from GTP: step 1/4. In terms of biological role, catalyzes the conversion of GTP to 2,5-diamino-6-ribosylamino-4(3H)-pyrimidinone 5'-phosphate (DARP), formate and pyrophosphate. The protein is GTP cyclohydrolase-2 of Pseudomonas aeruginosa (strain UCBPP-PA14).